The following is a 116-amino-acid chain: UPF0342 protein lhv_1666 (116 aa).

Belongs to the UPF0342 family.

The polypeptide is UPF0342 protein lhv_1666 (Lactobacillus helveticus (strain DPC 4571)).